A 206-amino-acid polypeptide reads, in one-letter code: Cytochrome c oxidase assembly protein CtaG (206 aa).

Topologically, residues 1 to 12 (MSKKPAGKNSNR) are cytoplasmic. A helical; Signal-anchor for type II membrane protein membrane pass occupies residues 13 to 35 (IVAAVCLAFFTGMIGMAYAAVPL). The Periplasmic portion of the chain corresponds to 36 to 206 (YKMFCQATGY…ISDTEANLGG (171 aa)). Residues 184–206 (VASSEPVQGTSKIISDTEANLGG) form a disordered region. Over residues 188–206 (EPVQGTSKIISDTEANLGG) the composition is skewed to polar residues.

It belongs to the COX11/CtaG family.

The protein localises to the cell inner membrane. In terms of biological role, exerts its effect at some terminal stage of cytochrome c oxidase synthesis, probably by being involved in the insertion of the copper B into subunit I. In Mesorhizobium japonicum (strain LMG 29417 / CECT 9101 / MAFF 303099) (Mesorhizobium loti (strain MAFF 303099)), this protein is Cytochrome c oxidase assembly protein CtaG.